The chain runs to 508 residues: Ribonuclease Y (508 aa).

Residues 198–264 (TVSVINLPND…RLTIEKLITD (67 aa)) form the KH domain. The HD domain maps to 324 to 417 (VLTHSIEVAK…VQAADAVSAS (94 aa)).

The protein belongs to the RNase Y family.

In terms of biological role, endoribonuclease that initiates mRNA decay. This chain is Ribonuclease Y, found in Fusobacterium nucleatum subsp. nucleatum (strain ATCC 25586 / DSM 15643 / BCRC 10681 / CIP 101130 / JCM 8532 / KCTC 2640 / LMG 13131 / VPI 4355).